A 193-amino-acid chain; its full sequence is Ectoine TRAP transporter small permease protein TeaB (193 aa).

4 consecutive transmembrane segments (helical) span residues 33–55, 65–82, 103–125, and 145–167; these read ILAL…RFAL, VNRI…GYAA, RALM…YYSV, and IFII…LFTA.

Belongs to the TRAP transporter small permease family. In terms of assembly, the complex comprises the extracytoplasmic solute receptor protein TeaA, and the two transmembrane proteins TeaB and TeaC.

The protein localises to the cell inner membrane. Part of the tripartite ATP-independent periplasmic (TRAP) transport system TeaABC involved in the uptake of ectoine and hydroxyectoine in response to osmotic upshock. Probably functions as a recovery system for synthesized ectoine that leaks out of the cell. This Halomonas elongata (strain ATCC 33173 / DSM 2581 / NBRC 15536 / NCIMB 2198 / 1H9) protein is Ectoine TRAP transporter small permease protein TeaB (teaB).